The primary structure comprises 134 residues: MGKDTIANIITYIRNADMNKKGMVQLPFTNITEKIVKILLREGFVENIRKHRENNKYFLVLTLRYRRNRKESSKNFLNLKRISTPGLRIYYNYQQIPRILGGMGIVILSTSRGIMTDREARLEKIGGEVLCYIW.

The protein belongs to the universal ribosomal protein uS8 family. Part of the 30S ribosomal subunit.

Its subcellular location is the plastid. It is found in the chloroplast. Functionally, one of the primary rRNA binding proteins, it binds directly to 16S rRNA central domain where it helps coordinate assembly of the platform of the 30S subunit. The polypeptide is Small ribosomal subunit protein uS8c (rps8) (Phaseolus angularis (Azuki bean)).